The primary structure comprises 364 residues: Pre-small/secreted glycoprotein (364 aa).

The N-terminal stretch at 1 to 32 (MGVTGILQLPRDRFKRTSFFLWVIILFQRTFS) is a signal peptide. Residue asparagine 40 is glycosylated (N-linked (GlcNAc...) asparagine; by host). 2 disulfide bridges follow: cysteine 108/cysteine 135 and cysteine 121/cysteine 147. Residues asparagine 204, asparagine 228, asparagine 238, asparagine 257, and asparagine 268 are each glycosylated (N-linked (GlcNAc...) asparagine; by host).

This sequence belongs to the filoviruses glycoprotein family. As to quaternary structure, homodimer; disulfide-linked. The homodimers are linked by two disulfide bonds in a parallel orientation. Monomer. Post-translationally, this precursor is processed into mature sGP and delta-peptide by host furin or furin-like proteases. The cleavage site corresponds to the furin optimal cleavage sequence [KR]-X-[KR]-R. N-glycosylated. In terms of processing, O-glycosylated.

It localises to the secreted. Its function is as follows. Seems to possess an anti-inflammatory activity as it can reverse the barrier-decreasing effects of TNF alpha. Might therefore contribute to the lack of inflammatory reaction seen during infection in spite the of extensive necrosis and massive virus production. Does not seem to be involved in activation of primary macrophages. Does not seem to interact specifically with neutrophils. In terms of biological role, viroporin that permeabilizes mammalian cell plasma membranes. It acts by altering permeation of ionic compounds and small molecules. This activity may lead to viral enterotoxic activity. In Epomops franqueti (Franquet's epauletted fruit bat), this protein is Pre-small/secreted glycoprotein (GP).